Reading from the N-terminus, the 334-residue chain is MNMEGPLRPRLVNCSDFQFGVVTTETIENALLHLAQQNEQAVKEAAGRTGSFRETRIVEFVFLLSEQWCLEKSVSYQAVEILERFMLKQAEDICRQATLQLRGKDTELQSWRAMKEQLVNKFILRLVSCVQLASKLSFHYKIVSNITVLNFLQALGYVHTKEELLESELDILKSLNFQINLPTPLAYVEMLLEVLGYNGCLVPATQLHATCLTLLDLVYLLHEPIYESLLRASIENSTPSQLQGEKFLSVKEDFMLLAVGIIAASAFIQNHECWSQVIGHLQSITGIASESIAEFSYAILTHSVGANTPGPQQPVPHKAARALRTAAAAASSNT.

Residues 29–180 (NALLHLAQQN…ILKSLNFQIN (152 aa)) enclose the Cyclin N-terminal domain.

In terms of assembly, interacts with PRR19; this interaction promotes crossover formation. Interacts with RFC3 and RFC4; these interactions facilitate crossover formation. Interacts with CDC34; this interaction regulates the cell-cycle progression. Isoform 2 is expressed in spermatocyte.

The protein resides in the nucleus. It localises to the cytoplasm. Its subcellular location is the chromosome. In terms of biological role, plays a role in the different steps of crossover formation during meiotic recombination. Participates in the crossover differentiation step of crossover-specific recombination intermediates through its interaction with PRR19. In addition, stimulates crossover formation through the interactions with RFC3 and RFC4 and simultaneously regulates cell-cycle progression through interactions with CDC34 and subsequent ubiquitination of WEE1. May also participates in an active deselection process that destabilizes or removes excess pre-CO intermediates. This Mus musculus (Mouse) protein is Cyclin N-terminal domain-containing protein 1.